The primary structure comprises 465 residues: Cysteine--tRNA ligase (465 aa).

Residue cysteine 30 participates in Zn(2+) binding. The short motif at 32–42 (PTVYDRAHLGN) is the 'HIGH' region element. Positions 213, 238, and 242 each coordinate Zn(2+). The 'KMSKS' region motif lies at 271 to 275 (KMSKS). Lysine 274 serves as a coordination point for ATP.

The protein belongs to the class-I aminoacyl-tRNA synthetase family. Monomer. Zn(2+) serves as cofactor.

The protein localises to the cytoplasm. The enzyme catalyses tRNA(Cys) + L-cysteine + ATP = L-cysteinyl-tRNA(Cys) + AMP + diphosphate. This is Cysteine--tRNA ligase from Ruegeria pomeroyi (strain ATCC 700808 / DSM 15171 / DSS-3) (Silicibacter pomeroyi).